Here is a 413-residue protein sequence, read N- to C-terminus: MKIYLVGGAVRDQLLNIPIKDRDYMVVGATVQEMLDKGYRQVGKDFPVFLHPKTQQEYALARTERKTGVGYGGFSVYAAPDVTLEEDLLRRDLTINAIAQDETGRVFDPYGGQADIEQRLLRHVSDAFVEDPLRVLRVARFAARFQPLGFKVAPETMALMQRIAASGELEALTPERVFQELDKALSTEAPQVFFEVLREAGGLAILFPEIEALFGIPQPEQWHPEIDTGIHTLMVLEQAARLSQDKQVRFAALVHDLGKALSPKEHLPKHHGHGQKGLPLIRALCERFRVPNDYRDLALLVSDQHQNIHNAFELRAETMVKLFDKADLWRKPERLPQLLLACEADCKGRTGLKERPYPQGAYVQHCFELARNVAIKPIIEAGFKGAEIKAQLHKQRVEVIDQYKRKTAVNAKP.

ATP-binding residues include Gly-8 and Arg-11. Residues Gly-8 and Arg-11 each contribute to the CTP site. Mg(2+)-binding residues include Asp-21 and Asp-23. 3 residues coordinate ATP: Arg-91, Arg-137, and Arg-140. Residues Arg-91, Arg-137, and Arg-140 each contribute to the CTP site. Residues 228–329 (TGIHTLMVLE…VKLFDKADLW (102 aa)) enclose the HD domain.

The protein belongs to the tRNA nucleotidyltransferase/poly(A) polymerase family. Bacterial CCA-adding enzyme type 1 subfamily. Monomer. Can also form homodimers and oligomers. The cofactor is Mg(2+). Ni(2+) serves as cofactor.

The catalysed reaction is a tRNA precursor + 2 CTP + ATP = a tRNA with a 3' CCA end + 3 diphosphate. The enzyme catalyses a tRNA with a 3' CCA end + 2 CTP + ATP = a tRNA with a 3' CCACCA end + 3 diphosphate. Functionally, catalyzes the addition and repair of the essential 3'-terminal CCA sequence in tRNAs without using a nucleic acid template. Adds these three nucleotides in the order of C, C, and A to the tRNA nucleotide-73, using CTP and ATP as substrates and producing inorganic pyrophosphate. tRNA 3'-terminal CCA addition is required both for tRNA processing and repair. Also involved in tRNA surveillance by mediating tandem CCA addition to generate a CCACCA at the 3' terminus of unstable tRNAs. While stable tRNAs receive only 3'-terminal CCA, unstable tRNAs are marked with CCACCA and rapidly degraded. The sequence is that of Multifunctional CCA protein from Shewanella loihica (strain ATCC BAA-1088 / PV-4).